A 467-amino-acid polypeptide reads, in one-letter code: UDP-N-acetylmuramate--L-alanine ligase (467 aa).

114 to 120 (GTHGKTT) contributes to the ATP binding site.

It belongs to the MurCDEF family.

It localises to the cytoplasm. The enzyme catalyses UDP-N-acetyl-alpha-D-muramate + L-alanine + ATP = UDP-N-acetyl-alpha-D-muramoyl-L-alanine + ADP + phosphate + H(+). It participates in cell wall biogenesis; peptidoglycan biosynthesis. Its function is as follows. Cell wall formation. This is UDP-N-acetylmuramate--L-alanine ligase from Chlorobium chlorochromatii (strain CaD3).